The primary structure comprises 217 residues: MSSTALKSGKISAYAAVKVDPDGDYCTPGAFDLERLFWKGSPKYTHVNEVWPNLYIGDEKTALDRYSLEKAGFTHILNAAHGRWNVDTGPEYYSDMNIEYHGVEADDLPTFNLSPFFYSAAEFIHTALQNETSKILVHCAMGRSRSAALVLAYLMIYKNMTVVDAIDQVLQHRCILPNRGFLKQLRELDIKLALERRDNMNGTNSSEKTGTSTETEI.

Residues 46 to 194 (HVNEVWPNLY…LRELDIKLAL (149 aa)) enclose the Tyrosine-protein phosphatase domain. Residue 138–145 (HCAMGRSR) coordinates substrate. Cys-139 serves as the catalytic Phosphocysteine intermediate.

It belongs to the protein-tyrosine phosphatase family. Non-receptor class dual specificity subfamily.

It localises to the cytoplasm. The protein resides in the nucleus. It carries out the reaction O-phospho-L-tyrosyl-[protein] + H2O = L-tyrosyl-[protein] + phosphate. It catalyses the reaction O-phospho-L-seryl-[protein] + H2O = L-seryl-[protein] + phosphate. The catalysed reaction is O-phospho-L-threonyl-[protein] + H2O = L-threonyl-[protein] + phosphate. Functionally, dual specificity phosphatase able to dephosphorylate phosphotyrosine, phosphoserine and phosphothreonine residues within the same substrate, with a preference for phosphotyrosine as a substrate. Involved in the modulation of AMPK and MAPK1/2 signaling pathways. In Anolis carolinensis (Green anole), this protein is Dual specificity phosphatase 29 (DUSP29).